The sequence spans 107 residues: U1-lycotoxin-Ls1b (107 aa).

The signal sequence occupies residues 1–20 (MMKVLVVVALLPTLISYSSS). The propeptide occupies 21-41 (EGIDDLEADELLSLMANEQTR). Intrachain disulfides connect Cys-44-Cys-59, Cys-51-Cys-68, Cys-58-Cys-86, and Cys-70-Cys-84.

Belongs to the neurotoxin 19 (CSTX) family. 04 (U1-Lctx) subfamily. As to expression, expressed by the venom gland.

Its subcellular location is the secreted. In Lycosa singoriensis (Wolf spider), this protein is U1-lycotoxin-Ls1b.